Here is a 1710-residue protein sequence, read N- to C-terminus: Phosphatidylinositol 4-phosphate 5-kinase (1710 aa).

Residues 68 to 98 (YKSIFKAFDLNNDNYLDFYEFCVAINIMLKG) form the EF-hand domain. Ca(2+) contacts are provided by D76, N78, D80, Y82, and E87. Disordered stretches follow at residues 139–255 (NNMN…DPIN), 427–479 (KQKK…IKSV), and 895–993 (GEGH…HNNN). The span at 140–235 (NMNGDNINGD…HNNNSHNNNN (96 aa)) shows a compositional bias: low complexity. The span at 236–248 (KAENSLGQPLNEK) shows a compositional bias: polar residues. Over residues 427–444 (KQKKKKKKKKKKKKKKEK) the composition is skewed to basic residues. Low complexity predominate over residues 456 to 468 (SSSMENKSQNKSQ). Residues 902 to 973 (EEEEKNDDEE…DDNDDNDDND (72 aa)) are compositionally biased toward acidic residues. Over residues 974–987 (EKSNIKIENKKDVP) the composition is skewed to basic and acidic residues. The PIPK domain maps to 1334-1709 (QKKTFHRILA…RFVTFIENHM (376 aa)).

It catalyses the reaction a 1,2-diacyl-sn-glycero-3-phospho-(1D-myo-inositol 4-phosphate) + ATP = a 1,2-diacyl-sn-glycero-3-phospho-(1D-myo-inositol-4,5-bisphosphate) + ADP + H(+). Its activity is regulated as follows. Catalytic activity is increase by myristoylated ARF1. Phosphatidic acid has no effect on catalytic activity. In terms of biological role, catalyzes the phosphorylation of phosphatidylinositol 4-phosphate (PtdIns(4)P/PI4P) to form phosphatidylinositol 4,5-bisphosphate (PtdIns(4,5)P2/PIP2), a lipid second messenger that regulates several cellular processes. This Plasmodium falciparum (isolate 3D7) protein is Phosphatidylinositol 4-phosphate 5-kinase.